Here is a 197-residue protein sequence, read N- to C-terminus: Carbohydrate-binding X8 domain-containing protein (197 aa).

An N-terminal signal peptide occupies residues 1 to 19; it reads MAVLLPLFLLSFMFTYSNA. Residues 101-113 are compositionally biased toward low complexity; sequence SCLSSSSSNGTPT. The disordered stretch occupies residues 101-176; that stretch reads SCLSSSSSNG…TSGDPNGGEE (76 aa). Polar residues predominate over residues 116 to 125; it reads YPSTGNSTTA. Low complexity predominate over residues 126–145; the sequence is SPGTTNPSTGNSTNSTLPTN. Residues 146 to 155 show a composition bias toward polar residues; that stretch reads DKPTSSTITF. Residues 156–170 are compositionally biased toward low complexity; sequence PDSTTMGPSSSTSGD. Asn-172 carries GPI-anchor amidated asparagine lipidation. A propeptide spans 173-197 (removed in mature form); it reads GGEELSVRTTTIILLTTIAAVALRV.

As to expression, expressed in the sieve elements.

The protein resides in the cell membrane. The polypeptide is Carbohydrate-binding X8 domain-containing protein (Arabidopsis thaliana (Mouse-ear cress)).